The sequence spans 207 residues: Uracil phosphoribosyltransferase (207 aa).

5-phospho-alpha-D-ribose 1-diphosphate is bound by residues R77, R102, and 129–137 (DPMLATGGS). Residues I192 and 197–199 (GDA) each bind uracil. D198 contacts 5-phospho-alpha-D-ribose 1-diphosphate.

The protein belongs to the UPRTase family. It depends on Mg(2+) as a cofactor.

It carries out the reaction UMP + diphosphate = 5-phospho-alpha-D-ribose 1-diphosphate + uracil. It functions in the pathway pyrimidine metabolism; UMP biosynthesis via salvage pathway; UMP from uracil: step 1/1. Allosterically activated by GTP. Its function is as follows. Catalyzes the conversion of uracil and 5-phospho-alpha-D-ribose 1-diphosphate (PRPP) to UMP and diphosphate. The polypeptide is Uracil phosphoribosyltransferase (Nocardia farcinica (strain IFM 10152)).